The sequence spans 361 residues: Peptide chain release factor 1 (361 aa).

An N5-methylglutamine modification is found at Q237. Positions 283–296 (VEDEKRRSEEESTR) are enriched in basic and acidic residues. Positions 283 to 305 (VEDEKRRSEEESTRRNLVSSGDR) are disordered.

This sequence belongs to the prokaryotic/mitochondrial release factor family. In terms of processing, methylated by PrmC. Methylation increases the termination efficiency of RF1.

It localises to the cytoplasm. Peptide chain release factor 1 directs the termination of translation in response to the peptide chain termination codons UAG and UAA. This Shewanella woodyi (strain ATCC 51908 / MS32) protein is Peptide chain release factor 1.